The chain runs to 407 residues: Tryptophan synthase beta chain (407 aa).

Lys-91 carries the N6-(pyridoxal phosphate)lysine modification.

It belongs to the TrpB family. Tetramer of two alpha and two beta chains. The cofactor is pyridoxal 5'-phosphate.

It carries out the reaction (1S,2R)-1-C-(indol-3-yl)glycerol 3-phosphate + L-serine = D-glyceraldehyde 3-phosphate + L-tryptophan + H2O. The protein operates within amino-acid biosynthesis; L-tryptophan biosynthesis; L-tryptophan from chorismate: step 5/5. Its function is as follows. The beta subunit is responsible for the synthesis of L-tryptophan from indole and L-serine. This is Tryptophan synthase beta chain from Streptococcus pneumoniae (strain Taiwan19F-14).